Here is a 220-residue protein sequence, read N- to C-terminus: MTHSPDLKGSSFTLSVLHLSDNEIAKTVEFLQEKVSQAPSFFASAPLVINIAKVEGDIDFTALKQGIADAGFIPVGVTGCKDKRVQNLASEAGFAIMSASKSPTQAPAKMAPTKIVRTPVRSGQQIYAKDGDLVVLAHVSAGAEVIADGSIHIHGTLRGRAIAGASGQQEARIICHDLQAELVSIAGDYWLSDQIESEYWQKKVMISKAEESLHLETLTI.

It belongs to the MinC family. As to quaternary structure, interacts with MinD and FtsZ.

In terms of biological role, cell division inhibitor that blocks the formation of polar Z ring septums. Rapidly oscillates between the poles of the cell to destabilize FtsZ filaments that have formed before they mature into polar Z rings. Prevents FtsZ polymerization. The chain is Probable septum site-determining protein MinC from Vibrio campbellii (strain ATCC BAA-1116).